The primary structure comprises 110 residues: UPF0235 protein Mpop_2087 (110 aa).

This sequence belongs to the UPF0235 family.

The polypeptide is UPF0235 protein Mpop_2087 (Methylorubrum populi (strain ATCC BAA-705 / NCIMB 13946 / BJ001) (Methylobacterium populi)).